A 203-amino-acid polypeptide reads, in one-letter code: Alpha-amylase/subtilisin inhibitor (203 aa).

Residues M1–P12 are compositionally biased toward polar residues. A signal peptide spans M1–A22. The interval M1 to H34 is disordered. Pro residues predominate over residues W15–P26. Cystine bridges form between C65-C112 and C166-C170.

This sequence belongs to the protease inhibitor I3 (leguminous Kunitz-type inhibitor) family.

This protein inhibits independently subtilisin and alpha-amylase. The protein is Alpha-amylase/subtilisin inhibitor of Hordeum vulgare (Barley).